Reading from the N-terminus, the 856-residue chain is Bifunctional uridylyltransferase/uridylyl-removing enzyme (856 aa).

The tract at residues 1 to 320 (MTLSAAPLQH…YCQVPRVTQH (320 aa)) is uridylyltransferase. The tract at residues 321 to 678 (ISEYFHAVNG…ARLADDHEGL (358 aa)) is uridylyl-removing. The HD domain maps to 439–561 (VDEHILMVVR…VRTPRRLAAL (123 aa)). ACT domains are found at residues 679-760 (QVLI…LPPQ) and 788-856 (ILSI…ALRI).

This sequence belongs to the GlnD family. Mg(2+) serves as cofactor.

It catalyses the reaction [protein-PII]-L-tyrosine + UTP = [protein-PII]-uridylyl-L-tyrosine + diphosphate. It carries out the reaction [protein-PII]-uridylyl-L-tyrosine + H2O = [protein-PII]-L-tyrosine + UMP + H(+). Its activity is regulated as follows. Uridylyltransferase (UTase) activity is inhibited by glutamine, while glutamine activates uridylyl-removing (UR) activity. Modifies, by uridylylation and deuridylylation, the PII regulatory proteins (GlnB and homologs), in response to the nitrogen status of the cell that GlnD senses through the glutamine level. Under low glutamine levels, catalyzes the conversion of the PII proteins and UTP to PII-UMP and PPi, while under higher glutamine levels, GlnD hydrolyzes PII-UMP to PII and UMP (deuridylylation). Thus, controls uridylylation state and activity of the PII proteins, and plays an important role in the regulation of nitrogen assimilation and metabolism. This Chromobacterium violaceum (strain ATCC 12472 / DSM 30191 / JCM 1249 / CCUG 213 / NBRC 12614 / NCIMB 9131 / NCTC 9757 / MK) protein is Bifunctional uridylyltransferase/uridylyl-removing enzyme.